The chain runs to 476 residues: Doublecortin domain-containing protein 2 (476 aa).

Doublecortin domains lie at 17–100 (KSVL…LNYL) and 139–221 (CTIF…LPYS). Residues 234-476 (FGQKASSLPP…QQNKDYAAVA (243 aa)) form a disordered region. The segment covering 261-272 (STVGSSDNSSPQ) has biased composition (polar residues). Phosphoserine is present on Ser-270. The segment covering 279-289 (KKEDVNSEKLT) has biased composition (basic and acidic residues). The span at 296–306 (KLKNSQETIPN) shows a compositional bias: polar residues. Positions 354-366 (EKANKDAEQKEDF) are enriched in basic and acidic residues. Over residues 415 to 426 (ELQQVNNELQLV) the composition is skewed to low complexity. Basic and acidic residues predominate over residues 446–455 (DPQRPPRPEV).

As to quaternary structure, interacts with DVL1, DVL2 and DVL3. In terms of tissue distribution, ubiquitously expressed. In brain, highly expressed in the entorhinal cortex, inferior temporal cortex, medial temporal cortex, hypothalamus, amygdala and hippocampus. Expressed in liver by cholangiocytes, the epithelial cells of the bile ducts (at protein level).

It localises to the cell projection. It is found in the cilium. The protein resides in the cytoplasm. Its subcellular location is the cytoskeleton. The protein localises to the cilium axoneme. It localises to the kinocilium. Protein that plays a role in the inhibition of canonical Wnt signaling pathway. May be involved in neuronal migration during development of the cerebral neocortex. Involved in the control of ciliogenesis and ciliary length. This is Doublecortin domain-containing protein 2 (DCDC2) from Homo sapiens (Human).